The sequence spans 114 residues: Protein S100-A9 (114 aa).

Threonine 2 bears the Blocked amino end (Thr) mark. The residue at position 3 (cysteine 3) is an S-nitrosocysteine; transient. 2 consecutive EF-hand domains span residues isoleucine 12–asparagine 47 and lysine 54–alanine 89. Position 20 (histidine 20) interacts with Zn(2+). 3 residues coordinate Ca(2+): serine 23, leucine 26, and histidine 28. A Zn(2+)-binding site is contributed by aspartate 30. Ca(2+) is bound by residues threonine 31, glutamate 36, aspartate 67, asparagine 69, aspartate 71, glutamine 73, and glutamate 78. Positions 91 and 95 each coordinate Zn(2+). A compositionally biased stretch (basic and acidic residues) spans lysine 93–glycine 102. Residues lysine 93 to proline 114 are disordered. Histidine 105 carries the pros-methylhistidine modification. Threonine 113 is modified (phosphothreonine; by MAPK14).

In terms of assembly, homodimer. Preferentially exists as a heterodimer or heterotetramer with S100A8 known as calprotectin (S100A8/A9). S100A9 interacts with ATP2A2. S100A9 interacts with AGER, and with the heterodimeric complex formed by TLR4 and LY96 in the presence of calcium and/or zinc ions. S100A9 binds quinoline-3-carboxamides in the presence of calcium and/or zinc ions. S100A9 interacts with amyloid-beta protein 40. Calprotectin (S100A8/9) interacts with CEACAM3 and tubulin filaments in a calcium-dependent manner. Heterotetrameric calprotectin (S100A8/A9) interacts with ANXA6 and associates with tubulin filaments in activated monocytes. Calprotectin (S100A8/9) interacts with NCF2/P67PHOX, RAC1, RAC2, CYBA and CYBB. Calprotectin (S100A8/9) interacts with NOS2 to form the iNOS-S100A8/A9 transnitrosylase complex; induced by LDL(ox). Calprotectin (S100A8/9) interacts with CD69. Phosphorylated. Phosphorylation inhibits activation of tubulin polymerization. Post-translationally, S-nitrosylation of Cys-3 is implicated in LDL(ox)-induced S-nitrosylation of GAPDH at 'Cys-247' through a transnitrosylase mechanism involving a iNOS-S100A8/9 complex. In terms of processing, methylation at His-105 by METTL9 reduces zinc-binding without affecting heterodimerization with S100A8. Calprotectin (S100A8/9) is predominantly expressed in myeloid cells. Except for inflammatory conditions, the expression is restricted to a specific stage of myeloid differentiation since both proteins are expressed in circulating neutrophils and monocytes but are absent in normal tissue macrophages and lymphocytes. Under chronic inflammatory conditions, such as psoriasis and malignant disorders, also expressed in the epidermis. Found in high concentrations at local sites of inflammation or in the serum of patients with inflammatory diseases such as rheumatoid, cystic fibrosis, inflammatory bowel disease, Crohn's disease, giant cell arteritis, cystic fibrosis, Sjogren's syndrome, systemic lupus erythematosus, and progressive systemic sclerosis. Involved in the formation and deposition of amyloids in the aging prostate known as corpora amylacea inclusions. Strongly up-regulated in many tumors, including gastric, esophageal, colon, pancreatic, bladder, ovarian, thyroid, breast and skin cancers.

It localises to the secreted. Its subcellular location is the cytoplasm. The protein localises to the cytoskeleton. The protein resides in the cell membrane. In terms of biological role, S100A9 is a calcium- and zinc-binding protein which plays a prominent role in the regulation of inflammatory processes and immune response. It can induce neutrophil chemotaxis, adhesion, can increase the bactericidal activity of neutrophils by promoting phagocytosis via activation of SYK, PI3K/AKT, and ERK1/2 and can induce degranulation of neutrophils by a MAPK-dependent mechanism. Predominantly found as calprotectin (S100A8/A9) which has a wide plethora of intra- and extracellular functions. The intracellular functions include: facilitating leukocyte arachidonic acid trafficking and metabolism, modulation of the tubulin-dependent cytoskeleton during migration of phagocytes and activation of the neutrophilic NADPH-oxidase. Also participates in regulatory T-cell differentiation together with CD69. Activates NADPH-oxidase by facilitating the enzyme complex assembly at the cell membrane, transferring arachidonic acid, an essential cofactor, to the enzyme complex and S100A8 contributes to the enzyme assembly by directly binding to NCF2/P67PHOX. The extracellular functions involve pro-inflammatory, antimicrobial, oxidant-scavenging and apoptosis-inducing activities. Its pro-inflammatory activity includes recruitment of leukocytes, promotion of cytokine and chemokine production, and regulation of leukocyte adhesion and migration. Acts as an alarmin or a danger associated molecular pattern (DAMP) molecule and stimulates innate immune cells via binding to pattern recognition receptors such as Toll-like receptor 4 (TLR4) and receptor for advanced glycation endproducts (AGER). Binding to TLR4 and AGER activates the MAP-kinase and NF-kappa-B signaling pathways resulting in the amplification of the pro-inflammatory cascade. Has antimicrobial activity towards bacteria and fungi and exerts its antimicrobial activity probably via chelation of Zn(2+) which is essential for microbial growth. Can induce cell death via autophagy and apoptosis and this occurs through the cross-talk of mitochondria and lysosomes via reactive oxygen species (ROS) and the process involves BNIP3. Can regulate neutrophil number and apoptosis by an anti-apoptotic effect; regulates cell survival via ITGAM/ITGB and TLR4 and a signaling mechanism involving MEK-ERK. Its role as an oxidant scavenger has a protective role in preventing exaggerated tissue damage by scavenging oxidants. Can act as a potent amplifier of inflammation in autoimmunity as well as in cancer development and tumor spread. Has transnitrosylase activity; in oxidatively-modified low-densitity lipoprotein (LDL(ox))-induced S-nitrosylation of GAPDH on 'Cys-247' proposed to transfer the NO moiety from NOS2/iNOS to GAPDH via its own S-nitrosylated Cys-3. The iNOS-S100A8/A9 transnitrosylase complex is proposed to also direct selective inflammatory stimulus-dependent S-nitrosylation of multiple targets such as ANXA5, EZR, MSN and VIM by recognizing a [IL]-x-C-x-x-[DE] motif. The polypeptide is Protein S100-A9 (Homo sapiens (Human)).